Consider the following 290-residue polypeptide: UPF0761 membrane protein YihY (290 aa).

The next 6 membrane-spanning stretches (helical) occupy residues 44–64 (LLSL…FPMF), 104–124 (VGAC…DSAL), 140–160 (FAVY…SLAI), 183–203 (IFPL…VPTI), 210–230 (AIVG…GFAL), and 244–264 (VLAV…IVLL).

This sequence belongs to the UPF0761 family.

The protein resides in the cell inner membrane. The chain is UPF0761 membrane protein YihY from Shigella boydii serotype 4 (strain Sb227).